Consider the following 316-residue polypeptide: D-alanine--D-alanine ligase (316 aa).

Residues 112–310 (KTALKAHGLP…FGKLCRWLVE (199 aa)) enclose the ATP-grasp domain. ATP is bound at residue 139-189 (MATPYVVKPNNEGSSVGVYLVNEAANGPPHLSDDMPDEVMVETYAPGRELT). D261, E277, and N279 together coordinate Mg(2+).

The protein belongs to the D-alanine--D-alanine ligase family. It depends on Mg(2+) as a cofactor. Requires Mn(2+) as cofactor.

Its subcellular location is the cytoplasm. It catalyses the reaction 2 D-alanine + ATP = D-alanyl-D-alanine + ADP + phosphate + H(+). It functions in the pathway cell wall biogenesis; peptidoglycan biosynthesis. Functionally, cell wall formation. The polypeptide is D-alanine--D-alanine ligase (Jannaschia sp. (strain CCS1)).